Consider the following 198-residue polypeptide: MAADISESGGHDCRGDQRSNTKLDADYPLRVLYCGVCSLPTEYCEYMPDVAKCRQWLEKNFPNEFAKLTVENSPKQEAGISEGQGTAGEEEEKKKQKRGGRGQIKQKKKTVPQKVTIAKIPRAKKKYVTRVCGLATFEIDLKEAQRFFAQKFSCGASVTGEDEIIIQGDFTDDIIDVIQEKWPEVDDDSIEDLGEVKK.

Disordered regions lie at residues 1–20 (MAADISESGGHDCRGDQRSN) and 72–110 (NSPKQEAGISEGQGTAGEEEEKKKQKRGGRGQIKQKKKT). The residue at position 2 (A2) is an N-acetylalanine. Positions 9 to 20 (GGHDCRGDQRSN) are enriched in basic and acidic residues. Phosphoserine is present on S73. Position 86 is a phosphothreonine (T86). Positions 95–110 (KQKRGGRGQIKQKKKT) are enriched in basic residues. In terms of domain architecture, SUI1 spans 115–182 (VTIAKIPRAK…DIIDVIQEKW (68 aa)). The residue at position 189 (S189) is a Phosphoserine.

It belongs to the DENR family. As to quaternary structure, interacts with MCTS1.

May be involved in the translation of target mRNAs by scanning and recognition of the initiation codon. Involved in translation initiation; promotes recruitment of aminoacetyled initiator tRNA to P site of 40S ribosomes. Can promote release of deacylated tRNA and mRNA from recycled 40S subunits following ABCE1-mediated dissociation of post-termination ribosomal complexes into subunits. This Bos taurus (Bovine) protein is Density-regulated protein (DENR).